We begin with the raw amino-acid sequence, 548 residues long: MDRFLTYFQVRGERANAVRLFGEISEQIDCSHLKRDCFVNGICARQHFKECCNIATDNGSRTNADKLVALALRALLDRQTIWTCVIKNADYVSQYADEQMEEEVNKLYDVYLQSGTREEFEGFRQRNRPSRVVMDDSCSMLSYFYIPMNQGNPAPVAKLSRWGQFGICYYDRTNVDGLIPYDEIGLAQAIDGLKDLIEGRLPVCPYTGANGRINAVLHLPLEMEVIMAVQENATQLMRRAAQDFKFITHAGWRLYPRLLRQRFAIEDATEGVIHHVMLGHLRYYDEDTSIVKYRFLNDGSLDWRTWTIPLHLMRTARLGHLQPESILVFMHKSLHVRYALWLTSLCLTQSRWLIQKLPELTGGTDVLYTRAYVHADNHKVPNVRDLMMNEVFRKIDDHWVIQKCHTTKEAITVTAIQIQRSIRGDGQWDTPMFHQSMALLTRLIVYWLTDVTERSAIFRLTCFAIFGCKPTARGRYIDWDDLGTFMKNVLDGRDLTVLEDETCFISMMRMAMLHVQRSKVVCATVLEAPLEIQQVGQIVEVPFDFMHN.

This sequence belongs to the orbivirus non-structural protein NS1 family.

This is Non-structural protein NS1 (Segment-5) from African horse sickness virus (AHSV).